Consider the following 205-residue polypeptide: Ferritin heavy chain (205 aa).

An N-terminal signal peptide occupies residues 1–19 (MVKLIASLLLLAVVAQAYG). The Ferritin-like diiron domain occupies 35 to 190 (VDMKDACIKG…GKLTTLKKMM (156 aa)). C41 and C150 are oxidised to a cystine. E52, E87, H90, E136, and Q172 together coordinate Fe cation.

This sequence belongs to the ferritin family. Oligomer of 12 light (L) chains and 12 heavy (H) chains; L and H chains are disulfide-linked. The functional molecule forms a roughly spherical shell with a diameter of 12 nm and contains a central cavity into which the insoluble ferric iron core is deposited. In terms of tissue distribution, expressed in hemolymph and gut (at protein level). Expressed in the head (at protein level). Expressed in thorax and abdomen.

It localises to the golgi apparatus. The protein resides in the secreted. The catalysed reaction is 4 Fe(2+) + O2 + 4 H(+) = 4 Fe(3+) + 2 H2O. Stores iron in a soluble, non-toxic, readily available form. Important for iron homeostasis. Iron is taken up in the ferrous form and deposited as ferric hydroxides after oxidation. Ferritin is composed of a heavy (H) chain which is responsible for the oxidation and uptake of ferrous iron, and a light (L) chain which facilitates the nucleation of the ferrihydrite iron core. Required for dietary iron absorption in the midgut. Involved in tissue iron detoxification by exporting excess iron. Functions as an antioxidant and protects the developing organs from cell-mediated ferroptosis. Required for embryo and larval development. Plays a role in blood cell (haemocyte) differentiation in the lymph gland at the larval stage. May also store Zn(2+) and Mn(2+) and thus may play a role in zinc and manganese homeostasis. This is Ferritin heavy chain from Drosophila melanogaster (Fruit fly).